The following is a 289-amino-acid chain: MEEKQEKVAEFYDKVTGAWDLFYGVHLHDGYYEPGTTATMAISQDAVIRMIDELLRFAGVSEDPAKKPRSMLDVGSGLGGTCVYVAKKYDIQCTGITISPNQVKYAQDYAATEGVENKVSFDCGDALDMPYSDGKFDVVFTINCIEHVHDKEKFIREMVRVAAPGAAIIIASQAHPNLSPGESLKPRDKKILQKICDGAGAVSLCSSDDYVRWLTPLPVKEIKAADWTQNITPLYPLLMKEAFTWKGFTSIVLKGGWRAINLINAVRLVAKAANDGILKFAVVTGRKSI.

Residues 71 to 80 (MLDVGSGLGG) form an SAM motif I region. Residues 134 to 142 (GKFDVVFTI) are SAM motif II. Residues 161 to 170 (VAAPGAAIII) form an SAM motif III region. Residues 287-289 (KSI) carry the Microbody targeting signal motif.

The protein belongs to the class I-like SAM-binding methyltransferase superfamily. gTMT family. In terms of assembly, homodimer. As to expression, mainly expressed in young leaves, and, to a lower extent, in mature leaves, flowers, stems and roots (at protein level).

Its subcellular location is the thylakoid. The protein resides in the peroxisome. The enzyme catalyses (3R)-3-hydroxy-16-methoxy-2,3-dihydrotabersonine + S-adenosyl-L-methionine = deacetoxyvindoline + S-adenosyl-L-homocysteine + H(+). Its pathway is alkaloid biosynthesis; vindoline biosynthesis. Inhibited by gamma-tocopherol. Functionally, S-adenosyl-L-methionine-dependent N-methyltransferase that catalyzes a nitrogen methylation involved in vindoline biosynthesis. Displays a strict requirement for a 2,3-dihydro bond in the aspidosperma skeleton. Can use 2,3-dihydrotabersonine, 2,3-dihydro-3-hydroxytabersonine and 2,3,6,7-tetraydro-3-hydroxytabersonine as substrates, but not tabersonine, vincadifformine, 21-hydroxycyclolochnericine, tryptamine, norharmane, harmaline, catharanthine, norajmaline, ajmaline, serpentine, ajmalicine, yohimbine or gamma-tocopherol. Inactive with picrinine as substrate. This chain is 3-hydroxy-16-methoxy-2,3-dihydrotabersonine N-methyltransferase, found in Catharanthus roseus (Madagascar periwinkle).